The primary structure comprises 204 residues: Ribosomal RNA small subunit methyltransferase G (204 aa).

S-adenosyl-L-methionine contacts are provided by G73, F78, and R139.

This sequence belongs to the methyltransferase superfamily. RNA methyltransferase RsmG family.

Its subcellular location is the cytoplasm. The catalysed reaction is guanosine(527) in 16S rRNA + S-adenosyl-L-methionine = N(7)-methylguanosine(527) in 16S rRNA + S-adenosyl-L-homocysteine. Functionally, specifically methylates the N7 position of guanine in position 527 of 16S rRNA. This is Ribosomal RNA small subunit methyltransferase G from Coxiella burnetii (strain CbuG_Q212) (Coxiella burnetii (strain Q212)).